We begin with the raw amino-acid sequence, 360 residues long: MSYQITINNNTTSNVQNIVIADPNLASLGENVVFSDSQGPLSSLYVYDGVWVVKLRSPLSPGQSITITASSGTPNIDPTIALYYNNGSSYSNLTLVGSPTVSIVQDFGGYAISAYASGDFFLVASPTGFTPSSSRLLVVDRWATTPTSLDAVGLRLYADTNDWFGVVRKYINGAQNVSIEQKISGTYSVVNEIDISQFAAFTDPLVMYLSINGSTANVKVYKQGSNIGTVSGNYSTTPYGNPSMAGYGTVDKHYANFIVLPYEPDPQVTVTPISSPSPTPTPTPTPTPTPTYDITYVVFDVTPSPTPTPTLTSTPTPTPTPTYDITYVIFDVTPSPTPTPTPTPTPTPTPTPTSTTSSNI.

The interval 269 to 289 (TVTPISSPSPTPTPTPTPTPT) is disordered. One copy of the Thr-Pro(N) repeat lies at 270–291 (VTPISSPSPTPTPTPTPTPTPT). Residues 275 to 289 (SPSPTPTPTPTPTPT) show a composition bias toward pro residues. Residues 278–353 (PTPTPTPTPT…PTPTPTPTPT (76 aa)) form a 3 Thr-Pro repeats regions and two near identical repeats region. The stretch at residues 292–301 (YDITYVVFDV) is a repeat. The Thr-Pro(N) repeat unit spans residues 302 to 322 (TPSPTPTPTLTSTPTPTPTPT). Positions 323–332 (YDITYVIFDV) form a repeat. The interval 332–360 (VTPSPTPTPTPTPTPTPTPTPTSTTSSNI) is disordered. The stretch at 333–353 (TPSPTPTPTPTPTPTPTPTPT) is one Thr-Pro(N) repeat. A compositionally biased stretch (pro residues) spans 335–351 (SPTPTPTPTPTPTPTPT).

This Thermoproteus tenax (TTV1) protein is Viral protein TPX.